A 445-amino-acid polypeptide reads, in one-letter code: Tubulin beta-3 chain (445 aa).

The GTP site is built by Q11, E69, S138, G142, T143, G144, N204, and N226. E69 is a Mg(2+) binding site. The interval 421 to 445 is disordered; it reads EYQQYQDATADEEEEYDEEEEEEAA. The segment covering 429 to 445 has biased composition (acidic residues); it reads TADEEEEYDEEEEEEAA.

This sequence belongs to the tubulin family. In terms of assembly, dimer of alpha and beta chains. A typical microtubule is a hollow water-filled tube with an outer diameter of 25 nm and an inner diameter of 15 nM. Alpha-beta heterodimers associate head-to-tail to form protofilaments running lengthwise along the microtubule wall with the beta-tubulin subunit facing the microtubule plus end conferring a structural polarity. Microtubules usually have 13 protofilaments but different protofilament numbers can be found in some organisms and specialized cells. Requires Mg(2+) as cofactor.

The protein resides in the cytoplasm. It localises to the cytoskeleton. In terms of biological role, tubulin is the major constituent of microtubules, a cylinder consisting of laterally associated linear protofilaments composed of alpha- and beta-tubulin heterodimers. Microtubules grow by the addition of GTP-tubulin dimers to the microtubule end, where a stabilizing cap forms. Below the cap, tubulin dimers are in GDP-bound state, owing to GTPase activity of alpha-tubulin. In Triticum aestivum (Wheat), this protein is Tubulin beta-3 chain (TUBB3).